A 348-amino-acid chain; its full sequence is Doublesex- and mab-3-related transcription factor dmd-10 (348 aa).

2 consecutive DNA-binding regions (DM) follow at residues 43–91 (CQRC…YNQF) and 119–166 (CQKC…KIRR). The interval 316-348 (SMSMSSSPSKDDESGDEDSDGLNSNSIIDVITV) is disordered.

Belongs to the DMRT family. As to expression, dimorphically expressed in the dimorphically connected interneuron AVG; expression is observed in the AVG in males, but not in hermaphrodites.

It is found in the nucleus. In terms of biological role, transcription factor. Plays a role in neuronal signaling in polymodal sensory neuron ASH, downstream of sensory receptor activation. Required for maintenance of AVG synapses. In Caenorhabditis elegans, this protein is Doublesex- and mab-3-related transcription factor dmd-10.